The following is a 129-amino-acid chain: Histone H2A-IV (129 aa).

Residues 1 to 22 (MSGRGKQGGKARAKAKSRSSRA) are disordered. Position 2 is an N-acetylserine (Ser2). A Phosphoserine modification is found at Ser2. An N6-(2-hydroxyisobutyryl)lysine modification is found at Lys6. Lys6 and Lys10 each carry N6-acetyllysine. The span at 7 to 19 (QGGKARAKAKSRS) shows a compositional bias: basic residues. Lys10 carries the N6-(2-hydroxyisobutyryl)lysine; alternate modification. Lys10 carries the post-translational modification N6-lactoyllysine; alternate. The residue at position 10 (Lys10) is an N6-succinyllysine. Residues Lys14 and Lys16 each participate in a glycyl lysine isopeptide (Lys-Gly) (interchain with G-Cter in ubiquitin) cross-link. An N6-(2-hydroxyisobutyryl)lysine; alternate modification is found at Lys37. Lys75 and Lys76 each carry N6-(2-hydroxyisobutyryl)lysine. Residue Lys96 is modified to N6-(2-hydroxyisobutyryl)lysine; alternate. Residue Lys96 is modified to N6-succinyllysine. Position 96 is an N6-glutaryllysine; alternate (Lys96). Residue Lys100 is modified to N6-glutaryllysine. Position 105 is an N5-methylglutamine (Gln105). Position 119 is an N6-(2-hydroxyisobutyryl)lysine; alternate (Lys119). Residues Lys119 and Lys120 each carry the N6-glutaryllysine; alternate modification. A Glycyl lysine isopeptide (Lys-Gly) (interchain with G-Cter in ubiquitin) cross-link involves residue Lys120.

It belongs to the histone H2A family. The nucleosome is a histone octamer containing two molecules each of H2A, H2B, H3 and H4 assembled in one H3-H4 heterotetramer and two H2A-H2B heterodimers. The octamer wraps approximately 147 bp of DNA. Monoubiquitination of Lys-120 (H2AK119Ub) gives a specific tag for epigenetic transcriptional repression. Following DNA double-strand breaks (DSBs), it is ubiquitinated through 'Lys-63' linkage of ubiquitin moieties, leading to the recruitment of repair proteins to sites of DNA damage. H2AK119Ub and ionizing radiation-induced 'Lys-63'-linked ubiquitination are distinct events. In terms of processing, phosphorylation on Ser-2 is enhanced during mitosis. Phosphorylation on Ser-2 directly represses transcription. Post-translationally, glutamine methylation at Gln-105 (H2AQ104me) by FBL is specifically dedicated to polymerase I. It is present at 35S ribosomal DNA locus and impairs binding of the FACT complex.

Its subcellular location is the nucleus. It is found in the chromosome. Its function is as follows. Core component of nucleosome. Nucleosomes wrap and compact DNA into chromatin, limiting DNA accessibility to the cellular machineries which require DNA as a template. Histones thereby play a central role in transcription regulation, DNA repair, DNA replication and chromosomal stability. DNA accessibility is regulated via a complex set of post-translational modifications of histones, also called histone code, and nucleosome remodeling. This is Histone H2A-IV from Gallus gallus (Chicken).